A 1062-amino-acid chain; its full sequence is Carbamoyl phosphate synthase large chain (1062 aa).

The interval methionine 1 to glutamate 401 is carboxyphosphate synthetic domain. Residues arginine 129, arginine 169, glycine 175, glycine 176, lysine 208, isoleucine 210, glutamate 215, glycine 241, isoleucine 242, histidine 243, glutamine 284, and glutamate 298 each coordinate ATP. Residues lysine 133–isoleucine 327 form the ATP-grasp 1 domain. The Mg(2+) site is built by glutamine 284, glutamate 298, and asparagine 300. The Mn(2+) site is built by glutamine 284, glutamate 298, and asparagine 300. Residues isoleucine 402–serine 546 are oligomerization domain. A carbamoyl phosphate synthetic domain region spans residues arginine 547–lysine 929. Residues aspartate 671–methionine 861 enclose the ATP-grasp 2 domain. The ATP site is built by arginine 707, aspartate 746, leucine 748, glutamate 752, glycine 777, valine 778, histidine 779, serine 780, glutamine 820, and glutamate 832. Positions 820, 832, and 834 each coordinate Mg(2+). 3 residues coordinate Mn(2+): glutamine 820, glutamate 832, and asparagine 834. Residues methionine 930–lysine 1062 form the MGS-like domain. Positions methionine 930–lysine 1062 are allosteric domain.

Belongs to the CarB family. As to quaternary structure, composed of two chains; the small (or glutamine) chain promotes the hydrolysis of glutamine to ammonia, which is used by the large (or ammonia) chain to synthesize carbamoyl phosphate. Tetramer of heterodimers (alpha,beta)4. Mg(2+) is required as a cofactor. The cofactor is Mn(2+).

The catalysed reaction is hydrogencarbonate + L-glutamine + 2 ATP + H2O = carbamoyl phosphate + L-glutamate + 2 ADP + phosphate + 2 H(+). It carries out the reaction hydrogencarbonate + NH4(+) + 2 ATP = carbamoyl phosphate + 2 ADP + phosphate + 2 H(+). It participates in amino-acid biosynthesis; L-arginine biosynthesis; carbamoyl phosphate from bicarbonate: step 1/1. The protein operates within pyrimidine metabolism; UMP biosynthesis via de novo pathway; (S)-dihydroorotate from bicarbonate: step 1/3. Large subunit of the glutamine-dependent carbamoyl phosphate synthetase (CPSase). CPSase catalyzes the formation of carbamoyl phosphate from the ammonia moiety of glutamine, carbonate, and phosphate donated by ATP, constituting the first step of 2 biosynthetic pathways, one leading to arginine and/or urea and the other to pyrimidine nucleotides. The large subunit (synthetase) binds the substrates ammonia (free or transferred from glutamine from the small subunit), hydrogencarbonate and ATP and carries out an ATP-coupled ligase reaction, activating hydrogencarbonate by forming carboxy phosphate which reacts with ammonia to form carbamoyl phosphate. The sequence is that of Carbamoyl phosphate synthase large chain from Lactobacillus helveticus (strain DPC 4571).